The sequence spans 140 residues: uncharacterized protein (140 aa).

The VOC domain occupies 4–127 (TLTHLALHVP…AGNYVEFSYG (124 aa)).

This is an uncharacterized protein from Pseudomonas aeruginosa (strain ATCC 15692 / DSM 22644 / CIP 104116 / JCM 14847 / LMG 12228 / 1C / PRS 101 / PAO1).